A 94-amino-acid chain; its full sequence is DNA-directed RNA polymerase subunit omega (94 aa).

This sequence belongs to the RNA polymerase subunit omega family. The RNAP catalytic core consists of 2 alpha, 1 beta, 1 beta' and 1 omega subunit. When a sigma factor is associated with the core the holoenzyme is formed, which can initiate transcription.

It catalyses the reaction RNA(n) + a ribonucleoside 5'-triphosphate = RNA(n+1) + diphosphate. In terms of biological role, promotes RNA polymerase assembly. Latches the N- and C-terminal regions of the beta' subunit thereby facilitating its interaction with the beta and alpha subunits. The protein is DNA-directed RNA polymerase subunit omega of Bifidobacterium animalis subsp. lactis (strain AD011).